A 448-amino-acid chain; its full sequence is Tubulin beta chain (448 aa).

The GTP site is built by Q11, E69, S138, G142, T143, G144, N204, and N226. Position 69 (E69) interacts with Mg(2+). Positions 429 to 448 are disordered; the sequence is GIDEGDEDYEIEEEKEPLEY.

It belongs to the tubulin family. Dimer of alpha and beta chains. A typical microtubule is a hollow water-filled tube with an outer diameter of 25 nm and an inner diameter of 15 nM. Alpha-beta heterodimers associate head-to-tail to form protofilaments running lengthwise along the microtubule wall with the beta-tubulin subunit facing the microtubule plus end conferring a structural polarity. Microtubules usually have 13 protofilaments but different protofilament numbers can be found in some organisms and specialized cells. It depends on Mg(2+) as a cofactor.

The protein localises to the cytoplasm. The protein resides in the cytoskeleton. Its function is as follows. Tubulin is the major constituent of microtubules, a cylinder consisting of laterally associated linear protofilaments composed of alpha- and beta-tubulin heterodimers. Microtubules grow by the addition of GTP-tubulin dimers to the microtubule end, where a stabilizing cap forms. Below the cap, tubulin dimers are in GDP-bound state, owing to GTPase activity of alpha-tubulin. The sequence is that of Tubulin beta chain (nda3) from Schizosaccharomyces pombe (strain 972 / ATCC 24843) (Fission yeast).